Consider the following 270-residue polypeptide: ATP synthase subunit a (270 aa).

5 consecutive transmembrane segments (helical) span residues 37–57, 98–118, 143–163, 208–228, and 239–259; these read NVHIDSLFFSVLTGLIFLGVF, IAPLALTIFCWVFLMNLMDLV, DVNITMAMALGVFALMIYYSI, LFGNMFAGEVVFILCAAMLPW, and AIFHILVILIQSFVFMMLTIV.

This sequence belongs to the ATPase A chain family. F-type ATPases have 2 components, CF(1) - the catalytic core - and CF(0) - the membrane proton channel. CF(1) has five subunits: alpha(3), beta(3), gamma(1), delta(1), epsilon(1). CF(0) has three main subunits: a(1), b(2) and c(9-12). The alpha and beta chains form an alternating ring which encloses part of the gamma chain. CF(1) is attached to CF(0) by a central stalk formed by the gamma and epsilon chains, while a peripheral stalk is formed by the delta and b chains.

The protein localises to the cell inner membrane. In terms of biological role, key component of the proton channel; it plays a direct role in the translocation of protons across the membrane. In Vibrio cholerae serotype O1 (strain ATCC 39315 / El Tor Inaba N16961), this protein is ATP synthase subunit a.